The following is a 469-amino-acid chain: Glutamate--tRNA ligase (469 aa).

The 'HIGH' region signature appears at 11–21 (PSPTGFIHLGN). Positions 243–247 (KMSKR) match the 'KMSKS' region motif. ATP is bound at residue K246.

The protein belongs to the class-I aminoacyl-tRNA synthetase family. Glutamate--tRNA ligase type 1 subfamily. As to quaternary structure, monomer.

It localises to the cytoplasm. It carries out the reaction tRNA(Glu) + L-glutamate + ATP = L-glutamyl-tRNA(Glu) + AMP + diphosphate. Its function is as follows. Catalyzes the attachment of glutamate to tRNA(Glu) in a two-step reaction: glutamate is first activated by ATP to form Glu-AMP and then transferred to the acceptor end of tRNA(Glu). The chain is Glutamate--tRNA ligase from Burkholderia ambifaria (strain MC40-6).